A 394-amino-acid chain; its full sequence is Elongation factor Tu 2 (394 aa).

One can recognise a tr-type G domain in the interval 10–204 (KPHVNVGTIG…YLDTYIPEPE (195 aa)). The tract at residues 19-26 (GHVDHGKT) is G1. 19–26 (GHVDHGKT) is a binding site for GTP. Threonine 26 lines the Mg(2+) pocket. Residues 60 to 64 (GITIN) are G2. A G3 region spans residues 81–84 (DCPG). GTP is bound by residues 81–85 (DCPGH) and 136–139 (NKCD). The segment at 136-139 (NKCD) is G4. The segment at 174–176 (SAL) is G5.

It belongs to the TRAFAC class translation factor GTPase superfamily. Classic translation factor GTPase family. EF-Tu/EF-1A subfamily. In terms of assembly, monomer.

The protein localises to the cytoplasm. It carries out the reaction GTP + H2O = GDP + phosphate + H(+). Its function is as follows. GTP hydrolase that promotes the GTP-dependent binding of aminoacyl-tRNA to the A-site of ribosomes during protein biosynthesis. This Yersinia enterocolitica serotype O:8 / biotype 1B (strain NCTC 13174 / 8081) protein is Elongation factor Tu 2.